Reading from the N-terminus, the 3119-residue chain is Huntingtin (3119 aa).

Positions Met-1–His-65 are disordered. Lys-9 bears the N6-acetyllysine mark. A compositionally biased stretch (pro residues) spans Gln-24–Ala-60. Residues Lys-155 and Lys-213 each carry the N6-acetyllysine modification. HEAT repeat units lie at residues Pro-183 to Asn-220 and Asn-225 to Arg-262. Lys-322 is modified (N6-acetyllysine). A phosphoserine mark is found at Ser-396, Ser-398, and Ser-411. At Lys-421 the chain carries N6-acetyllysine. An interaction with ZDHHC17 region spans residues Gly-470 to Gln-481. A disordered region spans residues Asp-495–Ser-558. The segment covering Asp-529–Ser-558 has biased composition (polar residues). Gly-530 carries the N-myristoyl glycine lipid modification. Residues Ser-620 and Ser-623 each carry the phosphoserine modification. HEAT repeat units lie at residues Phe-782–Ser-819 and Lys-882–Tyr-920. Residues Lys-1146–Ser-1204 form a disordered region. Positions Leu-1149–Pro-1160 are enriched in low complexity. 2 positions are modified to phosphoserine; by CDK5: Ser-1159 and Ser-1179. Polar residues predominate over residues Ala-1189 to Ser-1204. The HEAT 5 repeat unit spans residues Leu-1404 to Asn-1441. Ser-1853 is modified (phosphoserine). The short motif at Ile-2372 to Leu-2381 is the Nuclear export signal element. The interval Glu-2610 to Arg-2637 is disordered. A compositionally biased stretch (acidic residues) spans Glu-2611–Asp-2622.

The protein belongs to the huntingtin family. As to quaternary structure, interacts with PFN1. Interacts through its N-terminus with PRPF40A. Interacts with PQBP1. Interacts with SETD2. Interacts with SH3GLB1. Interacts with SYVN. Interacts with TPR; the interaction is inhibited by forms of Huntingtin with expanded polyglutamine stretch. Interacts with ZDHHC13 (via ANK repeats). Interacts with ZDHHC17 (via ANK repeats). Interacts with F8A1/F8A2/F8A3. Found in a complex with F8A1/F8A2/F8A3, HTT and RAB5A; mediates the recruitment of HTT by RAB5A. Post-translationally, phosphorylation at Ser-1159 and Ser-1179 by CDK5 in response to DNA damage in nuclei of neurons protects neurons against polyglutamine expansion as well as DNA damage mediated toxicity. Cleaved by caspases downstream of the polyglutamine stretch. In terms of processing, myristoylated at Gly-530, following proteolytic cleavage at Asp-529. The highest level is seen throughout the brain, but it is also found in the stomach, heart, testis, adipose tissue, muscle, spleen, liver, and kidney.

The protein resides in the cytoplasm. It localises to the nucleus. The protein localises to the cytoplasmic vesicle. It is found in the autophagosome. Functionally, may play a role in microtubule-mediated transport or vesicle function. Promotes the formation of autophagic vesicles. This chain is Huntingtin (Htt), found in Mus musculus (Mouse).